The sequence spans 301 residues: MAQTNPKVQTLIDAIPYFKKFYGKTIVIKYGGSAQTSDDLKEKFAQDIVLLTLLGIKPVVVHGGGARITELLNKLEIPSSFVDGYRVTCKESMRVVEMVLSGEINKNIASLLNFHGAKAIGISGKDSGIIKAVPKDGGKFGYTGDITSVNGELINNLIKEGFIPVIAPIANGDEANHPGFNINADVAACEIAMALKAQKVIFLTDTIGVLNKSGELIQTLDKANVEMFKKDGTIAGGMIPKVDSCIEAIHNGVNKAHIIDGRVEHSILLELFTSDGIGTQFIRVDNPNNGIDIEKLLNKQD.

Residues 64–65, Arg-86, and Asn-181 each bind substrate; that span reads GG.

It belongs to the acetylglutamate kinase family. ArgB subfamily.

The protein resides in the cytoplasm. It catalyses the reaction N-acetyl-L-glutamate + ATP = N-acetyl-L-glutamyl 5-phosphate + ADP. It functions in the pathway amino-acid biosynthesis; L-arginine biosynthesis; N(2)-acetyl-L-ornithine from L-glutamate: step 2/4. In terms of biological role, catalyzes the ATP-dependent phosphorylation of N-acetyl-L-glutamate. In Aliarcobacter butzleri (strain RM4018) (Arcobacter butzleri), this protein is Acetylglutamate kinase.